Consider the following 293-residue polypeptide: MNEKDLKALVEQLVGQMVGELDTNVVSETVKKATEVVVDNNACIDDITEVDIRKQLLVKNPKDAEAYLDMKAKTPARLGIGRAGTRYKTETVLRFRADHAAAQDAVFSYVDEEFIKENNMFAVETLCKDKDEYLTRPDLGRKFSPETINNIKSKFGTNQKVLILVGDGLSSAAIEANLKDCVPAIKQGLKMYGIDSSEILFVKHCRVGAMDHLGEELGCEVICMLVGERPGLVTAESMSAYIAYKPYIGMAEAKRTVISNIHKGGTTAVEAGAHIAELIKTMLDKKASGIDLK.

Adenosylcob(III)alamin-binding residues include V207 and E228.

It belongs to the EutC family. As to quaternary structure, the basic unit is a heterodimer which dimerizes to form tetramers. The heterotetramers trimerize; 6 large subunits form a core ring with 6 small subunits projecting outwards. The cofactor is adenosylcob(III)alamin.

It localises to the bacterial microcompartment. The catalysed reaction is ethanolamine = acetaldehyde + NH4(+). It participates in amine and polyamine degradation; ethanolamine degradation. Functionally, catalyzes the deamination of various vicinal amino-alcohols to oxo compounds. Allows this organism to utilize ethanolamine as the sole source of nitrogen and carbon in the presence of external vitamin B12. The sequence is that of Ethanolamine ammonia-lyase small subunit from Clostridioides difficile (strain 630) (Peptoclostridium difficile).